The primary structure comprises 148 residues: 3-dehydroquinate dehydratase (148 aa).

Catalysis depends on Y23, which acts as the Proton acceptor. Substrate is bound by residues N74, H80, and D87. H100 serves as the catalytic Proton donor. Substrate contacts are provided by residues 101–102 (IS) and R111.

The protein belongs to the type-II 3-dehydroquinase family. Homododecamer.

The catalysed reaction is 3-dehydroquinate = 3-dehydroshikimate + H2O. Its pathway is metabolic intermediate biosynthesis; chorismate biosynthesis; chorismate from D-erythrose 4-phosphate and phosphoenolpyruvate: step 3/7. In terms of biological role, catalyzes a trans-dehydration via an enolate intermediate. The chain is 3-dehydroquinate dehydratase from Halothermothrix orenii (strain H 168 / OCM 544 / DSM 9562).